The chain runs to 198 residues: Anthranilate synthase component 2 (198 aa).

The Glutamine amidotransferase type-1 domain occupies 2 to 198 (NVVVVDNYDS…GNFLDAAAAH (197 aa)). An L-glutamine-binding site is contributed by 57–59 (GPG). Residue Cys-87 is the Nucleophile; for GATase activity of the active site. Residue 137–138 (SL) coordinates L-glutamine. Residues His-175 and Glu-177 each act as for GATase activity in the active site.

As to quaternary structure, heterotetramer consisting of two non-identical subunits: a beta subunit (TrpG) and a large alpha subunit (TrpE).

It catalyses the reaction chorismate + L-glutamine = anthranilate + pyruvate + L-glutamate + H(+). It participates in amino-acid biosynthesis; L-tryptophan biosynthesis; L-tryptophan from chorismate: step 1/5. Functionally, part of a heterotetrameric complex that catalyzes the two-step biosynthesis of anthranilate, an intermediate in the biosynthesis of L-tryptophan. In the first step, the glutamine-binding beta subunit (TrpG) of anthranilate synthase (AS) provides the glutamine amidotransferase activity which generates ammonia as a substrate that, along with chorismate, is used in the second step, catalyzed by the large alpha subunit of AS (TrpE) to produce anthranilate. In the absence of TrpG, TrpE can synthesize anthranilate directly from chorismate and high concentrations of ammonia. The sequence is that of Anthranilate synthase component 2 (trpG) from Halobacterium salinarum (strain ATCC 700922 / JCM 11081 / NRC-1) (Halobacterium halobium).